Reading from the N-terminus, the 360-residue chain is MFVARSIAADHKDLIHDVSFDFHGRRMATCSSDQSVKVWDKSENGNWHCTASWKTHSGSVWRVTWAHPEFGQVLASCSFDRTAAVWEEIVGESNDKLRGQSHWVKRTTLVDSRTSVTDVKFAPKHMGLMLATCSADGVVRIYEAPDVMNLSQWSLQHEISCKLSCSCISWNPSSSRAHSPMIAVGSDDSSPNIMGKVQIYEYNENTRKYAKAETLMSVSDPVHDIAFAPNLGRSFHILAVATKDVRIFTMKPLRKELSSSGGVTKFEIHTVAQFDNHNSQVWRVSWNITGTVLASSGDDGTVRLWKANYMDNWKCIGVLKGDGNPVGNSYQGFFGSSVGSAGQSLQNSVNGTPSSGRKHS.

WD repeat units follow at residues 10 to 49, 55 to 96, 111 to 152, 160 to 210, 217 to 258, and 276 to 315; these read DHKDLIHDVSFDFHGRRMATCSSDQSVKVWDKSENGNWHC, THSG…SNDK, DSRT…NLSQ, SCKL…RKYA, SVSD…KELS, and NHNSQVWRVSWNITGTVLASSGDDGTVRLWKANYMDNWKC.

The protein belongs to the WD repeat SEC13 family. Component of the Nup107-160 subcomplex of the nuclear pore complex (NPC). The Nup107-160 subcomplex includes NUP160, NUP133, NUP107, NUP98, NUP85, NUP43, NUP37, SEH1 and SEC13. Component of the GATOR2 subcomplex, composed of MIOS, SEC13, SEH1L, WDR24 and WDR59. The GATOR2 complex interacts with CASTOR1 and CASTOR2; the interaction is negatively regulated by arginine. The GATOR2 complex interacts with SESN1, SESN2 and SESN3; the interaction is negatively regulated by amino acids.

The protein localises to the chromosome. It localises to the centromere. The protein resides in the kinetochore. It is found in the nucleus. Its subcellular location is the nuclear pore complex. The protein localises to the lysosome membrane. The GATOR2 complex is negatively regulated by the upstream amino acid sensors CASTOR1 and SESN2, which sequester the GATOR2 complex in absence of amino acids. In the presence of abundant amino acids, GATOR2 is released from CASTOR1 and SESN2 and activated. Its function is as follows. Component of the Nup107-160 subcomplex of the nuclear pore complex (NPC). The Nup107-160 subcomplex is required for the assembly of a functional NPC. The Nup107-160 subcomplex is also required for normal kinetochore microtubule attachment, mitotic progression and chromosome segregation. This subunit plays a role in recruitment of the Nup107-160 subcomplex to the kinetochore. As a component of the GATOR2 complex, functions as an activator of the amino acid-sensing branch of the mTORC1 signaling pathway. The GATOR2 complex indirectly activates mTORC1 through the inhibition of the GATOR1 subcomplex. GATOR2 probably acts as an E3 ubiquitin-protein ligase toward GATOR1. In the presence of abundant amino acids, the GATOR2 complex mediates ubiquitination of the NPRL2 core component of the GATOR1 complex, leading to GATOR1 inactivation. In the absence of amino acids, GATOR2 is inhibited, activating the GATOR1 complex. This is Nucleoporin SEH1-A (seh1l-a) from Xenopus laevis (African clawed frog).